The chain runs to 757 residues: RNA-directed RNA polymerase catalytic subunit (757 aa).

Residues 50–81 (SEKGKWTTNTETGAPQLNPIDGPLPEDNEPSG) are disordered. The segment covering 55–64 (WTTNTETGAP) has biased composition (polar residues). 2 consecutive short sequence motifs (nuclear localization signal) follow at residues 187–195 (RKRRVRDNM) and 203–216 (RTIG…NKRS). Residues 249 to 256 (RGFVYFVE) are promoter-binding site. The RdRp catalytic domain occupies 286–483 (VRKMMTNSQD…GINMSKKKSY (198 aa)).

This sequence belongs to the influenza viruses polymerase PB1 family. As to quaternary structure, influenza RNA polymerase is composed of three subunits: PB1, PB2 and PA. Interacts (via N-terminus) with PA (via C-terminus). Interacts (via C-terminus) with PB2 (via N-terminus); this interaction is essential for transcription initiation. In terms of processing, phosphorylated by host PRKCA.

The protein localises to the host nucleus. The protein resides in the host cytoplasm. The enzyme catalyses RNA(n) + a ribonucleoside 5'-triphosphate = RNA(n+1) + diphosphate. RNA-dependent RNA polymerase which is responsible for replication and transcription of virus RNA segments. The transcription of viral mRNAs occurs by a unique mechanism called cap-snatching. 5' methylated caps of cellular mRNAs are cleaved after 10-13 nucleotides by PA. In turn, these short capped RNAs are used as primers by PB1 for transcription of viral mRNAs. During virus replication, PB1 initiates RNA synthesis and copy vRNA into complementary RNA (cRNA) which in turn serves as a template for the production of more vRNAs. This is RNA-directed RNA polymerase catalytic subunit from Influenza A virus (strain A/Swine/Colorado/1/1977 H3N2).